A 273-amino-acid chain; its full sequence is Hydroxyethylthiazole kinase (273 aa).

Met-41 contributes to the substrate binding site. ATP-binding residues include Arg-117 and Thr-170. A substrate-binding site is contributed by Gly-197.

This sequence belongs to the Thz kinase family. It depends on Mg(2+) as a cofactor.

It catalyses the reaction 5-(2-hydroxyethyl)-4-methylthiazole + ATP = 4-methyl-5-(2-phosphooxyethyl)-thiazole + ADP + H(+). It participates in cofactor biosynthesis; thiamine diphosphate biosynthesis; 4-methyl-5-(2-phosphoethyl)-thiazole from 5-(2-hydroxyethyl)-4-methylthiazole: step 1/1. Its function is as follows. Catalyzes the phosphorylation of the hydroxyl group of 4-methyl-5-beta-hydroxyethylthiazole (THZ). The chain is Hydroxyethylthiazole kinase from Clostridium acetobutylicum (strain ATCC 824 / DSM 792 / JCM 1419 / IAM 19013 / LMG 5710 / NBRC 13948 / NRRL B-527 / VKM B-1787 / 2291 / W).